Consider the following 509-residue polypeptide: Erythropoietin receptor (509 aa).

The N-terminal stretch at 1 to 24 (MYHFGATLWPGVGSLCLLLAGATW) is a signal peptide. Residues 25-251 (APSPNSPDAK…SLLTASDLDP (227 aa)) lie on the Extracellular side of the membrane. Disulfide bonds link Cys52–Cys62 and Cys91–Cys107. In terms of domain architecture, Fibronectin type-III spans 148-248 (PPAGLLARRA…EPASLLTASD (101 aa)). A glycan (N-linked (GlcNAc...) asparagine) is linked at Asn184. Residues 234 to 238 (WSAWS) carry the WSXWS motif motif. Residues 252 to 274 (LILTLSLILVLILLLLAVLALLS) traverse the membrane as a helical segment. Residues 275–509 (HRRTLKQKIW…PSPPNYVTCS (235 aa)) lie on the Cytoplasmic side of the membrane. Lys282 participates in a covalent cross-link: Glycyl lysine isopeptide (Lys-Gly) (interchain with G-Cter in ubiquitin). The short motif at 283–291 (IWPGIPSPE) is the Box 1 motif element. Tyr369 and Tyr427 each carry phosphotyrosine; by JAK2. Residues 453 to 458 (LKYLYL) carry the ITIM motif motif. Lys454 is covalently cross-linked (Glycyl lysine isopeptide (Lys-Gly) (interchain with G-Cter in ubiquitin)). A phosphotyrosine; by JAK2 mark is found at Tyr455, Tyr457, Tyr469, Tyr486, Tyr490, and Tyr505. The tract at residues 467–509 (TDYSSGGSQETQGGSSSGPYSNPYENSLVPAPEPSPPNYVTCS) is disordered. The span at 470 to 493 (SSGGSQETQGGSSSGPYSNPYENS) shows a compositional bias: low complexity.

This sequence belongs to the type I cytokine receptor family. Type 1 subfamily. As to quaternary structure, forms homodimers on EPO stimulation. The tyrosine-phosphorylated form interacts with several SH2 domain-containing proteins including LYN, the adapter protein SH2B2, PTPN6, PTPN11, JAK2, PI3 kinases, STAT5A/B, SOCS3, CRKL. Interacts with INPP5D/SHIP1. SH2B2 binding inhibits the JAK-STAT signaling. Interacts with RHEX; this interaction occurs in a erythropoietin (EPO)-dependent manner. Interacts with ATXN2L. On EPO stimulation, phosphorylated on C-terminal tyrosine residues by JAK2. The phosphotyrosine motifs are also recruitment sites for several SH2-containing proteins and adapter proteins which mediate cell proliferation. Phosphorylation on Tyr-455 is required for PTPN6 interaction, Tyr-427 for PTPN11. Tyr-427 is also required for SOCS3 binding, but Tyr-455/Tyr-457 motif is the preferred binding site. Post-translationally, ubiquitinated by the ECS(SOCS2) complex following ligand-binding and phosphorylation by JAK2, leading to its degradation by the proteasome. Regulation by the ECS(SOCS2) complex acts as a negative feedback loop of erythropoietin-mediated signaling pathway. Ubiquitination at Lys-282 mediates receptor internalization, whereas ubiquitination at Lys-454 promotes trafficking of activated receptors to the lysosomes for degradation. Ubiquitinated by NOSIP; appears to be either multi-monoubiquitinated or polyubiquitinated. Ubiquitination mediates proliferation and survival of EPO-dependent cells.

Its subcellular location is the cell membrane. In terms of biological role, receptor for erythropoietin, which mediates erythropoietin-induced erythroblast proliferation and differentiation. Upon EPO stimulation, EPOR dimerizes triggering the JAK2/STAT5 signaling cascade. In some cell types, can also activate STAT1 and STAT3. May also activate the LYN tyrosine kinase. Its function is as follows. Isoform EPOR-T acts as a dominant-negative receptor of EPOR-mediated signaling. The chain is Erythropoietin receptor (EPOR) from Sus scrofa (Pig).